A 317-amino-acid chain; its full sequence is Putative ribose-phosphate pyrophosphokinase (317 aa).

The interval 211–224 (GRDVIVLDDEIAKG) is binding of phosphoribosylpyrophosphate.

Belongs to the ribose-phosphate pyrophosphokinase family.

It catalyses the reaction D-ribose 5-phosphate + ATP = 5-phospho-alpha-D-ribose 1-diphosphate + AMP + H(+). This is Putative ribose-phosphate pyrophosphokinase from Streptomyces coelicolor (strain ATCC BAA-471 / A3(2) / M145).